The sequence spans 234 residues: Synaptogyrin-1 (234 aa).

Methionine 1 is subject to N-acetylmethionine. The Cytoplasmic segment spans residues 1 to 23 (MEGGAYGAGKAGGAFDPYALVRQ). Residues 20–173 (LVRQPHTILR…QAVLAFQRYQ (154 aa)) form the MARVEL domain. Residues 24 to 44 (PHTILRVVSWLFSIVVFGSIV) traverse the membrane as a helical segment. The Lumenal portion of the chain corresponds to 45–71 (NEGYLNSASEGEEFCIYNRNPNACSYG). Residues 72–92 (VAVGVLAFLTCLLYLALDVYF) traverse the membrane as a helical segment. The Cytoplasmic portion of the chain corresponds to 93–103 (PQISSVKDRKK). The helical transmembrane segment at 104–124 (AVLSDIGVSAFWAFLWFVGFC) threads the bilayer. Residues 125-148 (YLANQWQVSKPKDNPLNEGTDAAR) are Lumenal-facing. A helical transmembrane segment spans residues 149 to 169 (AAIAFSFFSIFTWAGQAVLAF). Topologically, residues 170 to 234 (QRYQIGADSA…EPQGYQSQGY (65 aa)) are cytoplasmic. A disordered region spans residues 192-234 (SSMPYAPYVEPSTGPDPAGMGGTYQQPANTFDTEPQGYQSQGY). A compositionally biased stretch (polar residues) spans 214-234 (TYQQPANTFDTEPQGYQSQGY).

The protein belongs to the synaptogyrin family.

The protein resides in the cytoplasmic vesicle. It localises to the secretory vesicle. It is found in the synaptic vesicle membrane. Its subcellular location is the melanosome. Its function is as follows. May play a role in regulated exocytosis. Modulates the localization of synaptophysin/SYP into synaptic-like microvesicles and may therefore play a role in synaptic-like microvesicle formation and/or maturation. Involved in the regulation of short-term and long-term synaptic plasticity. In Pongo abelii (Sumatran orangutan), this protein is Synaptogyrin-1.